We begin with the raw amino-acid sequence, 1644 residues long: MEESKTLKSENHEPKKNVICEESKAVQVIGNQTLKARNDKSVKEIENSSPNRNSSKKNKQNDICIEKTEVKSCKVNAANLPGPKDLGLVLRDQSHCKAKKFPNSPVKAEKATISQAKSEKATSLQAKAEKSPKSPNSVKAEKASSYQMKSEKVPSSPAEAEKGPSLLLKDMRQKTELQQIGKKIPSSFTSVDKVNIEAVGGEKCALQNSPRSQKQQTCTDNTGDSDDSASGIEDVSDDLSKMKNDESNKENSSEMDYLENATVIDESALTPEQRLGLKQAEERLERDHIFRLEKRSPEYTNCRYLCKLCLIHIENIQGAHKHIKEKRHKKNILEKQEESELRSLPPPSPAHLAALSVAVIELAKEHGITDDDLRVRQEIVEEMSKVITTFLPECSLRLYGSSLTRFALKSSDVNIDIKFPPKMNHPDLLIKVLGILKKNVLYVDVESDFHAKVPVVVCRDRKSGLLCRVSAGNDMACLTTDLLTALGKIEPVFIPLVLAFRYWAKLCYIDSQTDGGIPSYCFALMVMFFLQQRKPPLLPCLLGSWIEGFDPKRMDDFQLKGIVEEKFVKWECNSSSATEKNSIAEENKAKADQPKDDTKKTETDNQSNAMKEKHGKSPLALETPNRVSLGQLWLELLKFYTLDFALEEYVICVRIQDILTRENKNWPKRRIAIEDPFSVKRNVARSLNSQLVYEYVVERFRAAYRYFACPQTKGGNKSTVDFKKREKGKISNKKPVKSNNMATNGCILLGETTEKINAEREQPVQCDEMDCTSQRCIIDNNNLLVNELDFADHGQDSSSLSTSKSSEIEPKLDKKQDDLAPSETCLKKELSQCNCIDLSKSPDPDKSTGTDCRSNLETESSHQSVCTDTSATSCNCKATEDASDLNDDDNLPTQELYYVFDKFILTSGKPPTIVCSICKKDGHSKNDCPEDFRKIDLKPLPPMTNRFREILDLVCKRCFDELSPPCSEQHNREQILIGLEKFIQKEYDEKARLCLFGSSKNGFGFRDSDLDICMTLEGHENAEKLNCKEIIENLAKILKRHPGLRNILPITTAKVPIVKFEHRRSGLEGDISLYNTLAQHNTRMLATYAAIDPRVQYLGYTMKVFAKRCDIGDASRGSLSSYAYILMVLYFLQQRKPPVIPVLQEIFDGKQIPQRMVDGWNAFFFDKTEELKKRLPSLGKNTESLGELWLGLLRFYTEEFDFKEYVISIRQKKLLTTFEKQWTSKCIAIEDPFDLNHNLGAGVSRKMTNFIMKAFINGRKLFGTPFYPLIGREAEYFFDSRVLTDGELAPNDRCCRVCGKIGHYMKDCPKRKSLLFRLKKKDSEEEKEGNEEEKDSRDVLDPRDLHDTRDFRDPRDLRCFICGDAGHVRRECPEVKLARQRNSSVAAAQLVRNLVNAQQVAGSAQQQGDQSIRTRQSSECSESPSYSPQPQPFPQNSSQSAAITQPSSQPGSQPKLGPPQQGAQPPHQVQMPLYNFPQSPPAQYSPMHNMGLLPMHPLQIPAPSWPIHGPVIHSAPGSAPSNIGLNDPSIIFAQPAARPVAIPNTSHDGHWPRTVAPNSLVNSGAVGNSEPGFRGLTPPIPWEHAPRPHFPLVPASWPYGLHQNFMHQGNARFQPNKPFYTQDRCATRRCRERCPHPPRGNVSE.

Disordered regions lie at residues 31-63 (NQTLKARNDKSVKEIENSSPNRNSSKKNKQNDI), 96-168 (CKAK…SLLL), and 205-257 (ALQN…EMDY). The segment covering 36-46 (ARNDKSVKEIE) has biased composition (basic and acidic residues). Serine 104 bears the Phosphoserine mark. Polar residues predominate over residues 112-125 (TISQAKSEKATSLQ). Phosphoserine is present on residues serine 134 and serine 156. Residues 206-222 (LQNSPRSQKQQTCTDNT) show a composition bias toward polar residues. Positions 238–252 (DLSKMKNDESNKENS) are enriched in basic and acidic residues. Positions 253–333 (SEMDYLENAT…KEKRHKKNIL (81 aa)) are required for interaction with LIN28A and pre-let-7 RNA. Residues cysteine 306, cysteine 309, histidine 322, and histidine 328 each contribute to the Zn(2+) site. Residues 579 to 617 (EKNSIAEENKAKADQPKDDTKKTETDNQSNAMKEKHGKS) form a disordered region. A compositionally biased stretch (basic and acidic residues) spans 582 to 603 (SIAEENKAKADQPKDDTKKTET). The 51-residue stretch at 628 to 678 (SLGQLWLELLKFYTLDFALEEYVICVRIQDILTRENKNWPKRRIAIEDPFS) folds into the PAP-associated 1 domain. The disordered stretch occupies residues 794–816 (GQDSSSLSTSKSSEIEPKLDKKQ). Basic and acidic residues predominate over residues 806–816 (SEIEPKLDKKQ). The tract at residues 901–1634 (DKFILTSGKP…CATRRCRERC (734 aa)) is sufficient for monouridylation activity. The CCHC-type 1 zinc finger occupies 913 to 930 (IVCSICKKDGHSKNDCPE). UTP contacts are provided by residues 998–1001 (SSKN), 1008–1011 (SDLD), asparagine 1081, lysine 1103, 1121–1125 (SYAYI), and histidine 1237. Mg(2+) is bound by residues aspartate 1009 and aspartate 1011. Residues 1184–1237 (SLGELWLGLLRFYTEEFDFKEYVISIRQKKLLTTFEKQWTSKCIAIEDPFDLNH) form the PAP-associated 2 domain. A CCHC-type 2 zinc finger spans residues 1293-1310 (RCCRVCGKIGHYMKDCPK). The disordered stretch occupies residues 1321–1348 (KDSEEEKEGNEEEKDSRDVLDPRDLHDT). Basic and acidic residues predominate over residues 1334 to 1348 (KDSRDVLDPRDLHDT). Residues 1357–1374 (LRCFICGDAGHVRRECPE) form a CCHC-type 3 zinc finger. Residues 1401–1426 (AGSAQQQGDQSIRTRQSSECSESPSY) show a composition bias toward low complexity. A disordered region spans residues 1401-1482 (AGSAQQQGDQ…LYNFPQSPPA (82 aa)). The span at 1441 to 1452 (AAITQPSSQPGS) shows a compositional bias: polar residues. Positions 1453–1470 (QPKLGPPQQGAQPPHQVQ) are enriched in low complexity. Omega-N-methylarginine is present on arginine 1624.

It belongs to the DNA polymerase type-B-like family. As to quaternary structure, interacts with LIN28A in the presence of pre-let-7 RNA. Interacts with T2BP. Interacts with MOV10; the interaction is RNA-dependent. Requires Mg(2+) as cofactor. Mn(2+) serves as cofactor.

The protein resides in the nucleus. It is found in the cytoplasm. Its subcellular location is the cytoplasmic ribonucleoprotein granule. It carries out the reaction RNA(n) + UTP = RNA(n)-3'-uridine ribonucleotide + diphosphate. Functionally, uridylyltransferase that mediates the terminal uridylation of mRNAs with short (less than 25 nucleotides) poly(A) tails, hence facilitating global mRNA decay. Essential for both oocyte maturation and fertility. Through 3' terminal uridylation of mRNA, sculpts, with TUT7, the maternal transcriptome by eliminating transcripts during oocyte growth. Involved in microRNA (miRNA)-induced gene silencing through uridylation of deadenylated miRNA targets. Also functions as an integral regulator of microRNA biogenesis using 3 different uridylation mechanisms. Acts as a suppressor of miRNA biogenesis by mediating the terminal uridylation of some miRNA precursors, including that of let-7 (pre-let-7), miR107, miR-143 and miR-200c. Uridylated miRNAs are not processed by Dicer and undergo degradation. Degradation of pre-let-7 contributes to the maintenance of embryonic stem (ES) cell pluripotency. Also catalyzes the 3' uridylation of miR-26A, a miRNA that targets IL6 transcript. This abrogates the silencing of IL6 transcript, hence promoting cytokine expression. In the absence of LIN28A, TUT7 and TUT4 monouridylate group II pre-miRNAs, which includes most of pre-let7 members, that shapes an optimal 3' end overhang for efficient processing. Adds oligo-U tails to truncated pre-miRNAS with a 5' overhang which may promote rapid degradation of non-functional pre-miRNA species. May also suppress Toll-like receptor-induced NF-kappa-B activation via binding to T2BP. Does not play a role in replication-dependent histone mRNA degradation. Due to functional redundancy between TUT4 and TUT7, the identification of the specific role of each of these proteins is difficult. TUT4 and TUT7 restrict retrotransposition of long interspersed element-1 (LINE-1) in cooperation with MOV10 counteracting the RNA chaperonne activity of L1RE1. TUT7 uridylates LINE-1 mRNAs in the cytoplasm which inhibits initiation of reverse transcription once in the nucleus, whereas uridylation by TUT4 destabilizes mRNAs in cytoplasmic ribonucleoprotein granules. This is Terminal uridylyltransferase 4 from Homo sapiens (Human).